A 199-amino-acid chain; its full sequence is Holliday junction branch migration complex subunit RuvA (199 aa).

The segment at 1 to 64 is domain I; sequence MIALLTGKLA…EDAINLYGFR (64 aa). Residues 65-143 form a domain II region; it reads TMEEKEMFQL…KLGHGPLQQD (79 aa). A flexible linker region spans residues 144-148; that stretch reads VAPAD. The tract at residues 149-199 is domain III; it reads AHNDMRDDVVSALVNLGYKEAVVQKTVDEIGVAADATVESLLKQALKKLMK.

This sequence belongs to the RuvA family. As to quaternary structure, homotetramer. Forms an RuvA(8)-RuvB(12)-Holliday junction (HJ) complex. HJ DNA is sandwiched between 2 RuvA tetramers; dsDNA enters through RuvA and exits via RuvB. An RuvB hexamer assembles on each DNA strand where it exits the tetramer. Each RuvB hexamer is contacted by two RuvA subunits (via domain III) on 2 adjacent RuvB subunits; this complex drives branch migration. In the full resolvosome a probable DNA-RuvA(4)-RuvB(12)-RuvC(2) complex forms which resolves the HJ.

It is found in the cytoplasm. The RuvA-RuvB-RuvC complex processes Holliday junction (HJ) DNA during genetic recombination and DNA repair, while the RuvA-RuvB complex plays an important role in the rescue of blocked DNA replication forks via replication fork reversal (RFR). RuvA specifically binds to HJ cruciform DNA, conferring on it an open structure. The RuvB hexamer acts as an ATP-dependent pump, pulling dsDNA into and through the RuvAB complex. HJ branch migration allows RuvC to scan DNA until it finds its consensus sequence, where it cleaves and resolves the cruciform DNA. The protein is Holliday junction branch migration complex subunit RuvA of Geotalea daltonii (strain DSM 22248 / JCM 15807 / FRC-32) (Geobacter daltonii).